We begin with the raw amino-acid sequence, 718 residues long: Auxin response factor 2 (718 aa).

The tract at residues M1–V24 is disordered. The segment covering T8 to G18 has biased composition (acidic residues). Positions F147–A249 form a DNA-binding region, TF-B3.

This sequence belongs to the ARF family. Homo and heterodimers. As to expression, expressed in roots, culms, leaves and young panicles.

The protein resides in the nucleus. In terms of biological role, auxin response factors (ARFs) are transcriptional factors that bind specifically to the DNA sequence 5'-TGTCTC-3' found in the auxin-responsive promoter elements (AuxREs). This Oryza sativa subsp. japonica (Rice) protein is Auxin response factor 2 (ARF2).